The chain runs to 87 residues: MKRLLVLTLVSAILMAEFLDATDAVTTRRRRRRHLHKGAGKSQMLEEVNMEVKAKNFAQEMEREDGKLHFLGTYNEPVMNNDLFCGL.

An N-terminal signal peptide occupies residues 1–16; the sequence is MKRLLVLTLVSAILMA.

The protein is Developmentally-regulated ectodermal protein of Tripneustes gratilla (Hawaian sea urchin).